The primary structure comprises 372 residues: GTP cyclohydrolase 1 type 2 homolog (372 aa).

A divalent metal cation contacts are provided by histidine 67, histidine 68, aspartate 106, histidine 332, and glutamate 335.

Belongs to the GTP cyclohydrolase I type 2/NIF3 family. In terms of assembly, homohexamer.

In Halalkalibacterium halodurans (strain ATCC BAA-125 / DSM 18197 / FERM 7344 / JCM 9153 / C-125) (Bacillus halodurans), this protein is GTP cyclohydrolase 1 type 2 homolog.